A 535-amino-acid polypeptide reads, in one-letter code: Probable galacturonosyltransferase 12 (535 aa).

Over M1–M37 the chain is Cytoplasmic. A helical; Signal-anchor for type II membrane protein transmembrane segment spans residues V38–V58. The Lumenal portion of the chain corresponds to D59 to S535. 2 N-linked (GlcNAc...) asparagine glycosylation sites follow: N397 and N430.

Belongs to the glycosyltransferase 8 family. As to expression, highly expressed in stems. Detected in roots, inflorescences, siliques, and leaves. Expressed in cells undergoing secondary wall thickening, including interfascicular fibers and primary and secondary xylem.

It localises to the golgi apparatus membrane. The protein operates within glycan metabolism; pectin biosynthesis. Its function is as follows. Involved in pectin assembly and/or distribution, and in the synthesis of secondary wall glucuronoxylan. Probably involved in the synthesis of the glycosyl sequence at the glucuronoxylan reducing end. May be involved in synthesis of a complex glycan primer for xylan synthesis. In Arabidopsis thaliana (Mouse-ear cress), this protein is Probable galacturonosyltransferase 12 (GAUT12).